A 918-amino-acid chain; its full sequence is MELGTLLAQPGLWTRDTSWALLYFLCYILPQTAPQVLRIGGIFETVENEPVNVEELAFKFAVTSINRNRTLMPNTTLTYDIQRINLFDSFEASRRACDQLALGVAALFGPSHSSSVSAVQSICNALEVPHIQTRWKHPSVDNKDLFYINLYPDYAAISRAILDLVLYYNWKTVTVVYEDSTGLIRLQELIKAPSRYNIKIKIRQLPSGNKDAKPLLKEMKKGKEFYVIFDCSHETAAEILKQILFMGMMTEYYHYFFTTLDLFALDLELYRYSGVNMTGFRLLNIDNPHVSSIIEKWSMERLQAPPRPETGLLDGMMTTEAALMYDAVYMVAIASHRASQLTVSSLQCHRHKPWRLGPRFMNLIKEARWDGLTGHITFNKTNGLRKDFDLDIISLKEEGTEKAAGEVSKHLYKVWKKIGIWNSNSGLNMTDSNKDKSSNITDSLANRTLIVTTILEEPYVMYRKSDKPLYGNDRFEGYCLDLLKELSNILGFIYDVKLVPDGKYGAQNDKGEWNGMVKELIDHRADLAVAPLTITYVREKVIDFSKPFMTLGISILYRKPNGTNPGVFSFLNPLSPDIWMYVLLACLGVSCVLFVIARFTPYEWYNPHPCNPDSDVVENNFTLLNSFWFGVGALMQQGSELMPKALSTRIVGGIWWFFTLIIISSYTANLAAFLTVERMESPIDSADDLAKQTKIEYGAVRDGSTMTFFKKSKISTYEKMWAFMSSRQQTALVRNSDEGIQRVLTTDYALLMESTSIEYVTQRNCNLTQIGGLIDSKGYGVGTPIGSPYRDKITIAILQLQEEGKLHMMKEKWWRGNGCPEEDNKEASALGVENIGGIFIVLAAGLVLSVFVAIGEFIYKSRKNNDIEQAFCFFYGLQCKQTHPTNSTSGTTLSTDLECGKLIREERGIRKQSSVHTV.

The signal sequence occupies residues 1-30 (MELGTLLAQPGLWTRDTSWALLYFLCYILP). Over 31–576 (QTAPQVLRIG…VFSFLNPLSP (546 aa)) the chain is Extracellular. 7 N-linked (GlcNAc...) asparagine glycosylation sites follow: N68, N74, N276, N379, N428, N439, and N446. 3 residues coordinate L-glutamate: P531, T533, and R538. The N-linked (GlcNAc...) asparagine glycan is linked to N561. Residues 577–597 (DIWMYVLLACLGVSCVLFVIA) traverse the membrane as a helical segment. Over 598–653 (RFTPYEWYNPHPCNPDSDVVENNFTLLNSFWFGVGALMQQGSELMPKALSTRIVGG) the chain is Cytoplasmic. A helical membrane pass occupies residues 654–674 (IWWFFTLIIISSYTANLAAFL). The Extracellular portion of the chain corresponds to 675 to 834 (TVERMESPID…KEASALGVEN (160 aa)). The L-glutamate site is built by S704 and T705. A Phosphoserine; by PKC modification is found at S725. E753 provides a ligand contact to L-glutamate. The residue at position 761 (T761) is a Phosphothreonine; by PKC. C765 and C819 are oxidised to a cystine. An N-linked (GlcNAc...) asparagine glycan is attached at N766. The chain crosses the membrane as a helical span at residues 835–855 (IGGIFIVLAAGLVLSVFVAIG). Over 856–918 (EFIYKSRKNN…IRKQSSVHTV (63 aa)) the chain is Cytoplasmic.

Belongs to the glutamate-gated ion channel (TC 1.A.10.1) family. GRIK1 subfamily. In terms of assembly, homotetramer or heterotetramer of pore-forming glutamate receptor subunits. Tetramers may be formed by the dimerization of dimers. Can form functional heteromeric receptors with GRIK4 and GRIK5. Interacts with KLHL17.

The protein localises to the cell membrane. It is found in the postsynaptic cell membrane. It catalyses the reaction Ca(2+)(in) = Ca(2+)(out). Functionally, ionotropic glutamate receptor that functions as a cation-permeable ligand-gated ion channel, gated by L-glutamate and the glutamatergic agonist kainic acid. L-glutamate acts as an excitatory neurotransmitter at many synapses in the central nervous system. Binding of the excitatory neurotransmitter L-glutamate induces a conformation change, leading to the opening of the cation channel, and thereby converts the chemical signal to an electrical impulse. The receptor then desensitizes rapidly and enters a transient inactive state, characterized by the presence of bound agonist. In Macaca fascicularis (Crab-eating macaque), this protein is Glutamate receptor ionotropic, kainate 1 (GRIK1).